The following is a 953-amino-acid chain: uncharacterized protein (953 aa).

11 consecutive transmembrane segments (helical) span residues 23 to 43 (VVTS…AFLI), 103 to 123 (YLFI…PILL), 148 to 168 (GRYF…LYII), 392 to 412 (VSAI…VGMI), 435 to 455 (LLGL…MSFL), 481 to 501 (AYFA…SAAT), 540 to 560 (ISSG…LGAF), 575 to 595 (LSSM…VITF), 599 to 619 (IISP…YIAY), 642 to 662 (LFQT…LFAV), and 666 to 686 (WGPI…HLHL). A disordered region spans residues 910–953 (VPPPYNDVKDEANGEANGEFDTASKENNPFADPKYKEEESRSAV). Positions 942–953 (PKYKEEESRSAV) are enriched in basic and acidic residues. S949 bears the Phosphoserine mark.

It belongs to the CSC1 (TC 1.A.17) family.

The protein localises to the membrane. Functionally, acts as an osmosensitive calcium-permeable cation channel. This is an uncharacterized protein from Saccharomyces cerevisiae (strain ATCC 204508 / S288c) (Baker's yeast).